A 341-amino-acid chain; its full sequence is Mitochondrial glutathione transporter SLC25A40 (341 aa).

Solcar repeat units lie at residues 14 to 132 (ITPS…LRDI), 140 to 224 (RAEI…VKQS), and 234 to 328 (PTFA…GKSF). The next 6 membrane-spanning stretches (helical) occupy residues 20–40 (MIAS…LDVV), 104–124 (LWSG…IYFT), 143–163 (IASL…ISPL), 200–221 (WGPT…YELV), 236–256 (FAIS…VTLP), and 299–319 (GLFA…AIMI).

This sequence belongs to the mitochondrial carrier (TC 2.A.29) family.

The protein resides in the mitochondrion inner membrane. The enzyme catalyses glutathione(in) = glutathione(out). Its function is as follows. Probable mitochondrial transporter required for glutathione import into mitochondria. Glutathione, which plays key roles in oxidative metabolism, is produced exclusively in the cytosol and is imported in many organelles. Mitochondrial glutathione is required for the activity and stability of proteins containing iron-sulfur clusters. The polypeptide is Mitochondrial glutathione transporter SLC25A40 (Xenopus tropicalis (Western clawed frog)).